The sequence spans 436 residues: 3-ketoacyl-CoA thiolase (436 aa).

The active-site Acyl-thioester intermediate is the Cys-99. Catalysis depends on proton acceptor residues His-392 and Cys-422.

It belongs to the thiolase-like superfamily. Thiolase family. In terms of assembly, heterotetramer of two alpha chains (FadJ) and two beta chains (FadI).

It localises to the cytoplasm. It carries out the reaction an acyl-CoA + acetyl-CoA = a 3-oxoacyl-CoA + CoA. Its pathway is lipid metabolism; fatty acid beta-oxidation. Its function is as follows. Catalyzes the final step of fatty acid oxidation in which acetyl-CoA is released and the CoA ester of a fatty acid two carbons shorter is formed. This chain is 3-ketoacyl-CoA thiolase, found in Yersinia pestis bv. Antiqua (strain Angola).